Reading from the N-terminus, the 109-residue chain is Encapsulin nanocompartment cargo protein EncD (109 aa).

Residue E47 participates in Fe cation binding. Residues 61–94 form a disordered region; the sequence is AGGRGAAAPTPAREAPAEAPRLARGSADELHEAA. A compositionally biased stretch (low complexity) spans 66–85; that stretch reads AAAPTPAREAPAEAPRLARG. The tract at residues 100 to 106 is probable targeting peptide; the sequence is LTVGSLR.

The protein resides in the encapsulin nanocompartment. In terms of biological role, cargo protein of a type 1 encapsulin nanocompartment. May help nucleate Fe atoms in the interior of the encapsulin nanocompartment. Present in about 47 copies/encapsulin nanocompartment. In Myxococcus xanthus (strain DK1622), this protein is Encapsulin nanocompartment cargo protein EncD.